The primary structure comprises 483 residues: Fructose-like PTS system EIIBC component (483 aa).

A PTS EIIB type-2 domain is found at Met-1 to Thr-105. The active-site Phosphocysteine intermediate; for EIIB activity is the Cys-13. Position 13 is a phosphocysteine; by EIIA (Cys-13). Residues Val-128–Ala-475 form the PTS EIIC type-2 domain. The next 10 helical transmembrane spans lie at Leu-132–Leu-152, Ile-180–Ile-200, Pro-204–Thr-224, Gly-227–Phe-247, Leu-264–Val-284, Met-303–Ile-323, Ala-344–Ala-364, Ile-380–Leu-400, Met-402–Ile-422, and Val-442–Val-462.

Its subcellular location is the cell inner membrane. It carries out the reaction D-fructose(out) + N(pros)-phospho-L-histidyl-[protein] = D-fructose 1-phosphate(in) + L-histidyl-[protein]. In terms of biological role, the phosphoenolpyruvate-dependent sugar phosphotransferase system (sugar PTS), a major carbohydrate active transport system, catalyzes the phosphorylation of incoming sugar substrates concomitantly with their translocation across the cell membrane. The enzyme II FrvAB PTS system is involved in fructose transport. This is Fructose-like PTS system EIIBC component from Escherichia coli (strain K12).